The following is a 250-amino-acid chain: Aquaporin SIP2-1 (250 aa).

2 helical membrane passes run 14 to 34 (PWLV…GALV) and 55 to 75 (VALS…TGGA). The short motif at 78–80 (NPL) is the NPA 1 element. A run of 4 helical transmembrane segments spans residues 95–115 (LYLF…ILGV), 132–152 (SVGV…VVIV), 178–200 (FHLL…AWAY), and 211–231 (LLVY…VVTL). Positions 191–193 (NPA) match the NPA 2 motif.

It belongs to the MIP/aquaporin (TC 1.A.8) family. SIP (TC 1.A.8.10) subfamily. In terms of tissue distribution, expressed in leaves and anthers, and at lower levels in roots.

Its subcellular location is the membrane. In terms of biological role, aquaporins facilitate the transport of water and small neutral solutes across cell membranes. The polypeptide is Aquaporin SIP2-1 (SIP2-1) (Oryza sativa subsp. japonica (Rice)).